Here is a 268-residue protein sequence, read N- to C-terminus: MVLTKRIIPCLDLKDGRVVKGTHFVDLRDAGDPVELAERYNEQGADEVVFLDITASKEQRGAILSVISRAADQLFLPLTVGGGIRTIDDIQQLLRAGADKVSINTSAIKDPSLISDGAVRFGNQCIVVAVDVRRSTAANPDATVIHLPDGTTCWYEVVIYGGSTPTGIDAVRWVQDAEERGAGEILLTSMETDGTKNGFDLAITAAVSDAVSIPVIASGGVGTLADFYDGVTAGKADACLAASVFHYGEFTVRDVKTYLAGRGVPVRL.

Active-site residues include aspartate 12 and aspartate 131.

It belongs to the HisA/HisF family. In terms of assembly, heterodimer of HisH and HisF.

It localises to the cytoplasm. The catalysed reaction is 5-[(5-phospho-1-deoxy-D-ribulos-1-ylimino)methylamino]-1-(5-phospho-beta-D-ribosyl)imidazole-4-carboxamide + L-glutamine = D-erythro-1-(imidazol-4-yl)glycerol 3-phosphate + 5-amino-1-(5-phospho-beta-D-ribosyl)imidazole-4-carboxamide + L-glutamate + H(+). Its pathway is amino-acid biosynthesis; L-histidine biosynthesis; L-histidine from 5-phospho-alpha-D-ribose 1-diphosphate: step 5/9. In terms of biological role, IGPS catalyzes the conversion of PRFAR and glutamine to IGP, AICAR and glutamate. The HisF subunit catalyzes the cyclization activity that produces IGP and AICAR from PRFAR using the ammonia provided by the HisH subunit. The protein is Imidazole glycerol phosphate synthase subunit HisF of Methanosphaerula palustris (strain ATCC BAA-1556 / DSM 19958 / E1-9c).